A 260-amino-acid polypeptide reads, in one-letter code: Uroplakin-1b (260 aa).

The Cytoplasmic segment spans residues 1-15; the sequence is MAKDDSTVRCFQGLL. Residues 16-36 form a helical membrane-spanning segment; the sequence is IFGHVIVGMCGIALTAECIFF. At 37–59 the chain is on the extracellular side; that stretch reads VSDQHSLYPLLEATNNDDIFGAA. A helical transmembrane segment spans residues 60-80; sequence WIGMFVGICLFCLSVLAIVGI. The Cytoplasmic segment spans residues 81 to 86; sequence MKSNRK. The chain crosses the membrane as a helical span at residues 87–107; it reads ILLAYFIMMFIVYGFEVASCI. Over 108–229 the chain is Extracellular; that stretch reads TAATQRDFFT…ELISGPMDRH (122 aa). Residues 230 to 250 traverse the membrane as a helical segment; that stretch reads AWGVAWFGFAILCWTFWVLLG. At 251-260 the chain is on the cytoplasmic side; that stretch reads TMFYWSRIEY.

This sequence belongs to the tetraspanin (TM4SF) family. Heterodimer with uroplakin-3A (UPK3A) or uroplakin-3B (UPK3B). N-glycosylated with high-mannose oligosaccharides.

The protein localises to the membrane. Component of the asymmetric unit membrane (AUM); a highly specialized biomembrane elaborated by terminally differentiated urothelial cells. May play an important role in normal bladder epithelial physiology, possibly in regulating membrane permeability of superficial umbrella cells or in stabilizing the apical membrane through AUM/cytoskeletal interactions. The sequence is that of Uroplakin-1b (Upk1b) from Rattus norvegicus (Rat).